The primary structure comprises 364 residues: tRNA 2-selenouridine synthase (364 aa).

In terms of domain architecture, Rhodanese spans leucine 14–tryptophan 137. The active-site S-selanylcysteine intermediate is the cysteine 97.

Belongs to the SelU family. In terms of assembly, monomer.

The enzyme catalyses 5-methylaminomethyl-2-thiouridine(34) in tRNA + selenophosphate + (2E)-geranyl diphosphate + H2O + H(+) = 5-methylaminomethyl-2-selenouridine(34) in tRNA + (2E)-thiogeraniol + phosphate + diphosphate. The catalysed reaction is 5-methylaminomethyl-2-thiouridine(34) in tRNA + (2E)-geranyl diphosphate = 5-methylaminomethyl-S-(2E)-geranyl-thiouridine(34) in tRNA + diphosphate. It catalyses the reaction 5-methylaminomethyl-S-(2E)-geranyl-thiouridine(34) in tRNA + selenophosphate + H(+) = 5-methylaminomethyl-2-(Se-phospho)selenouridine(34) in tRNA + (2E)-thiogeraniol. It carries out the reaction 5-methylaminomethyl-2-(Se-phospho)selenouridine(34) in tRNA + H2O = 5-methylaminomethyl-2-selenouridine(34) in tRNA + phosphate. Functionally, involved in the post-transcriptional modification of the uridine at the wobble position (U34) of tRNA(Lys), tRNA(Glu) and tRNA(Gln). Catalyzes the conversion of 2-thiouridine (S2U-RNA) to 2-selenouridine (Se2U-RNA). Acts in a two-step process involving geranylation of 2-thiouridine (S2U) to S-geranyl-2-thiouridine (geS2U) and subsequent selenation of the latter derivative to 2-selenouridine (Se2U) in the tRNA chain. This chain is tRNA 2-selenouridine synthase, found in Salmonella heidelberg (strain SL476).